Reading from the N-terminus, the 425-residue chain is Serine--tRNA ligase (425 aa).

232–234 (TSE) is an L-serine binding site. Residues 263-265 (RRE) and Val-279 contribute to the ATP site. Glu-286 provides a ligand contact to L-serine. 350-353 (EVVS) contacts ATP. L-serine is bound at residue Thr-387.

It belongs to the class-II aminoacyl-tRNA synthetase family. Type-1 seryl-tRNA synthetase subfamily. In terms of assembly, homodimer. The tRNA molecule binds across the dimer.

The protein localises to the cytoplasm. The enzyme catalyses tRNA(Ser) + L-serine + ATP = L-seryl-tRNA(Ser) + AMP + diphosphate + H(+). It carries out the reaction tRNA(Sec) + L-serine + ATP = L-seryl-tRNA(Sec) + AMP + diphosphate + H(+). It functions in the pathway aminoacyl-tRNA biosynthesis; selenocysteinyl-tRNA(Sec) biosynthesis; L-seryl-tRNA(Sec) from L-serine and tRNA(Sec): step 1/1. Catalyzes the attachment of serine to tRNA(Ser). Is also able to aminoacylate tRNA(Sec) with serine, to form the misacylated tRNA L-seryl-tRNA(Sec), which will be further converted into selenocysteinyl-tRNA(Sec). The chain is Serine--tRNA ligase from Methanospirillum hungatei JF-1 (strain ATCC 27890 / DSM 864 / NBRC 100397 / JF-1).